A 331-amino-acid polypeptide reads, in one-letter code: 6-phosphogluconolactonase (331 aa).

This sequence belongs to the cycloisomerase 2 family.

It catalyses the reaction 6-phospho-D-glucono-1,5-lactone + H2O = 6-phospho-D-gluconate + H(+). It participates in carbohydrate degradation; pentose phosphate pathway; D-ribulose 5-phosphate from D-glucose 6-phosphate (oxidative stage): step 2/3. Catalyzes the hydrolysis of 6-phosphogluconolactone to 6-phosphogluconate. This chain is 6-phosphogluconolactonase, found in Enterobacter sp. (strain 638).